Here is a 134-residue protein sequence, read N- to C-terminus: UPF0299 membrane protein KPK_1586 (134 aa).

4 helical membrane-spanning segments follow: residues 5-25, 26-46, 66-86, and 93-113; these read LTII…LYAG, IFIA…MLIL, ILIR…MQYW, and LGPV…VVSW.

It belongs to the UPF0299 family.

The protein localises to the cell inner membrane. The protein is UPF0299 membrane protein KPK_1586 of Klebsiella pneumoniae (strain 342).